A 1106-amino-acid chain; its full sequence is Probable LRR receptor-like serine/threonine-protein kinase At1g74360 (1106 aa).

An N-terminal signal peptide occupies residues methionine 1–alanine 34. Topologically, residues glycine 35–serine 736 are extracellular. LRR repeat units lie at residues arginine 86–alanine 109, leucine 110–cysteine 134, asparagine 136–leucine 156, serine 157–asparagine 182, leucine 184–glycine 204, cysteine 205–phenylalanine 226, and glycine 227–glycine 250. Residues asparagine 93 and asparagine 106 are each glycosylated (N-linked (GlcNAc...) asparagine). An N-linked (GlcNAc...) asparagine glycan is attached at asparagine 141. N-linked (GlcNAc...) asparagine glycans are attached at residues asparagine 188 and asparagine 193. Asparagine 242 and asparagine 251 each carry an N-linked (GlcNAc...) asparagine glycan. LRR repeat units lie at residues cysteine 252–cysteine 275, glutamine 276–isoleucine 299, serine 300–leucine 323, asparagine 325–arginine 346, threonine 348–lysine 371, leucine 372–isoleucine 396, serine 398–asparagine 419, methionine 420–lysine 443, threonine 445–cysteine 468, serine 470–methionine 492, valine 566–methionine 593, aspartate 594–leucine 617, leucine 619–leucine 640, lysine 641–leucine 664, and glutamate 666–threonine 690. N-linked (GlcNAc...) asparagine glycosylation is found at asparagine 309 and asparagine 322. 4 N-linked (GlcNAc...) asparagine glycosylation sites follow: asparagine 365, asparagine 374, asparagine 384, and asparagine 408. N-linked (GlcNAc...) asparagine glycosylation is found at asparagine 454 and asparagine 467. Residues asparagine 623, asparagine 628, asparagine 652, asparagine 671, asparagine 709, and asparagine 713 are each glycosylated (N-linked (GlcNAc...) asparagine). Residues leucine 737–valine 757 form a helical membrane-spanning segment. At lysine 758 to methionine 1106 the chain is on the cytoplasmic side. Phosphothreonine occurs at positions 803 and 811. The Protein kinase domain occupies phenylalanine 814 to phenylalanine 1095. ATP-binding positions include valine 820–valine 828 and lysine 842. Residue aspartate 941 is the Proton acceptor of the active site. Tyrosine 983 bears the Phosphotyrosine mark. Threonine 991 is modified (phosphothreonine).

It belongs to the protein kinase superfamily. Ser/Thr protein kinase family.

The protein resides in the mitochondrion membrane. The enzyme catalyses L-seryl-[protein] + ATP = O-phospho-L-seryl-[protein] + ADP + H(+). It carries out the reaction L-threonyl-[protein] + ATP = O-phospho-L-threonyl-[protein] + ADP + H(+). This Arabidopsis thaliana (Mouse-ear cress) protein is Probable LRR receptor-like serine/threonine-protein kinase At1g74360.